The following is a 188-amino-acid chain: GTPase KRas (188 aa).

GTP is bound by residues 10–18 (GAGGVGKSA), 29–35 (VDEYDPT), 59–60 (AG), and 116–119 (NKCD). Residues 32–40 (YDPTIEDSY) carry the Effector region motif. The disordered stretch occupies residues 168–188 (EKMSKDGKKKKKKTKTKCIIM). The residue at position 185 (cysteine 185) is a Cysteine methyl ester. The S-farnesyl cysteine moiety is linked to residue cysteine 185. Positions 186 to 188 (IIM) are cleaved as a propeptide — removed in mature form.

Belongs to the small GTPase superfamily. Ras family.

The protein localises to the cell membrane. It is found in the cytoplasm. The enzyme catalyses GTP + H2O = GDP + phosphate + H(+). Its activity is regulated as follows. Alternates between an inactive form bound to GDP and an active form bound to GTP. Activated by a guanine nucleotide-exchange factor (GEF) and inactivated by a GTPase-activating protein (GAP). In terms of biological role, ras proteins bind GDP/GTP and possess intrinsic GTPase activity. Plays an important role in the regulation of cell proliferation. May play a role in promoting oncogenic events by inducing transcriptional silencing of tumor suppressor genes (TSGs). The protein is GTPase KRas (KRAS) of Meleagris gallopavo (Wild turkey).